A 336-amino-acid polypeptide reads, in one-letter code: Transmembrane protease serine 12 (336 aa).

A signal peptide spans 1–18; it reads MASWALSAALLCLGGAFA. Over 19–312 the chain is Extracellular; it reads YSELHSLSLR…HYLSQGNINR (294 aa). The region spanning 66–306 is the Peptidase S1 domain; that stretch reads IIGGSQADTG…FQEWMTHYLS (241 aa). Cys-95 and Cys-111 are disulfide-bonded. Catalysis depends on charge relay system residues His-110 and Asp-159. 3 disulfides stabilise this stretch: Cys-194–Cys-262, Cys-225–Cys-241, and Cys-252–Cys-282. N-linked (GlcNAc...) asparagine glycans are attached at residues Asn-207, Asn-237, and Asn-246. The active-site Charge relay system is Ser-256. A helical membrane pass occupies residues 313–333; that stretch reads LFNMDIVLGQVLTALGSVILL. The Cytoplasmic portion of the chain corresponds to 334 to 336; it reads GVT.

The protein belongs to the peptidase S1 family. In terms of tissue distribution, exclusively expressed in the testis, from spermatocytes to elongated spermatids (at protein level).

The protein resides in the cell membrane. It is found in the cytoplasmic vesicle. It localises to the secretory vesicle. The protein localises to the acrosome. Its function is as follows. Required for male fertility. Plays a critical role in sperm capacitation and acrosome reactions during fertilization, and also plays a role in the regulation of proteins involved in spermatogenesis. Regulates protein pathways that promote chromosomal synapsis formation, double-strand break repair, formation of the inner mitochondrial membrane cristae and apoptosis in developing sperm. Required for normal sperm motility and binding to the zona pellucida, potentially via a role in ADAM3 protein maturation. In Mus musculus (Mouse), this protein is Transmembrane protease serine 12.